The primary structure comprises 105 residues: UPF0145 protein lpg0197 (105 aa).

Belongs to the UPF0145 family.

The sequence is that of UPF0145 protein lpg0197 from Legionella pneumophila subsp. pneumophila (strain Philadelphia 1 / ATCC 33152 / DSM 7513).